The sequence spans 79 residues: Small ribosomal subunit protein eS17 (79 aa).

The protein belongs to the eukaryotic ribosomal protein eS17 family.

This Saccharolobus solfataricus (strain ATCC 35092 / DSM 1617 / JCM 11322 / P2) (Sulfolobus solfataricus) protein is Small ribosomal subunit protein eS17.